Reading from the N-terminus, the 290-residue chain is 30 kDa spicule matrix protein alpha (290 aa).

A signal peptide spans 1-20; the sequence is MRGFVYVLVCVLALASFSRA. Residues 92–162 form the C-type lectin domain; sequence ANMYCGQMHP…YTNWERMTAP (71 aa). Asparagine 102 carries N-linked (GlcNAc...) asparagine glycosylation.

In terms of tissue distribution, accumulates exclusively in mineralized tissues.

Functionally, matrix protein of the sea urchin embryo spicule. The function of the matrix proteins is to direct crystal growth in certain orientations and inhibit growth in others. In Strongylocentrotus purpuratus (Purple sea urchin), this protein is 30 kDa spicule matrix protein alpha (SM30A).